The primary structure comprises 418 residues: MGVVLARGAFRERSMLTLPDFPLPDARGRFGPYGGRYVPETLIPALEELEAAYREAKKDPAFLEELDHYLRQFAGRPTPLYHAKRLSEYWGGAQVFLKREDLLHTGAHKINNTLGQALLARRMGKRRVIAETGAGQHGVSVATVAALFGLECVVYMGEEDVRRQALNVFRMKLLGAEVRPVAAGSRTLKDATNEAIRDWITNVRTTFYILGSVVGPHPYPMMVRDFQSVIGEEVKRQSLELFGRLPDALIAAVGGGSNAIGLFAPFAYLPEGRPKLIGVEAAGEGLSTGRHAASIGAGKRGVLHGSYMYLLYDHDGQITPAHSVSAGLDYPGVGPEHSYYADAGVAEYASVTDEEALEGFKLLARLEGIIPALESAHAIAYAAKVVPEMDKDQVVVINLSGRGDKDVTEVMRLLGGEL.

Lysine 109 is subject to N6-(pyridoxal phosphate)lysine.

The protein belongs to the TrpB family. As to quaternary structure, tetramer of two alpha and two beta chains. Requires pyridoxal 5'-phosphate as cofactor.

It carries out the reaction (1S,2R)-1-C-(indol-3-yl)glycerol 3-phosphate + L-serine = D-glyceraldehyde 3-phosphate + L-tryptophan + H2O. It functions in the pathway amino-acid biosynthesis; L-tryptophan biosynthesis; L-tryptophan from chorismate: step 5/5. The beta subunit is responsible for the synthesis of L-tryptophan from indole and L-serine. In Thermus thermophilus (strain ATCC 27634 / DSM 579 / HB8), this protein is Tryptophan synthase beta chain.